We begin with the raw amino-acid sequence, 493 residues long: Amphoterin-induced protein 1 (493 aa).

A signal peptide spans M1–A27. The region spanning G28 to G61 is the LRRNT domain. Topologically, residues G28 to T372 are extracellular. 2 disulfide bridges follow: C34/C40 and C38/C47. 6 LRR repeats span residues Y62 to T83, N87 to P108, N111 to G132, A135 to D156, Q159 to K179, and K186 to Q206. The N-linked (GlcNAc...) asparagine glycan is linked to N72. Residues N221–E272 form the LRRCT domain. Cystine bridges form between C225–C253, C227–C270, and C290–C341. N269, N315, N349, and N360 each carry an N-linked (GlcNAc...) asparagine glycan. The Ig-like C2-type domain occupies N269–S353. The chain crosses the membrane as a helical span at residues A373–L393. At T394–V493 the chain is on the cytoplasmic side. The tract at residues K405 to V493 is disordered. Residues S408–N424 are compositionally biased toward polar residues. Residues G431–A442 are compositionally biased toward basic and acidic residues. S477 and S481 each carry phosphoserine.

It belongs to the immunoglobulin superfamily. AMIGO family. In terms of assembly, homodimer, and heterodimer with AMIGO2 and AMIGO3. Interacts with KCNB1.

Its subcellular location is the cell membrane. The protein localises to the perikaryon. The protein resides in the cell projection. It is found in the dendrite. It localises to the axon. In terms of biological role, promotes growth and fasciculation of neurites from cultured hippocampal neurons. May be involved in fasciculation as well as myelination of developing neural axons. May have a role in regeneration as well as neural plasticity in the adult nervous system. May mediate homophilic as well as heterophilic cell-cell interaction and contribute to signal transduction through its intracellular domain. Assembled with KCNB1 modulates the gating characteristics of the delayed rectifier voltage-dependent potassium channel KCNB1. This Rattus norvegicus (Rat) protein is Amphoterin-induced protein 1.